The following is a 394-amino-acid chain: 8-amino-7-oxononanoate synthase (394 aa).

Substrate is bound at residue R22. Residue 113–114 (GY) participates in pyridoxal 5'-phosphate binding. Residue H138 participates in substrate binding. The pyridoxal 5'-phosphate site is built by S184, H212, and T240. Position 243 is an N6-(pyridoxal phosphate)lysine (K243). Position 359 (T359) interacts with substrate.

It belongs to the class-II pyridoxal-phosphate-dependent aminotransferase family. BioF subfamily. Homodimer. Pyridoxal 5'-phosphate is required as a cofactor.

The enzyme catalyses 6-carboxyhexanoyl-[ACP] + L-alanine + H(+) = (8S)-8-amino-7-oxononanoate + holo-[ACP] + CO2. Its pathway is cofactor biosynthesis; biotin biosynthesis. In terms of biological role, catalyzes the decarboxylative condensation of pimeloyl-[acyl-carrier protein] and L-alanine to produce 8-amino-7-oxononanoate (AON), [acyl-carrier protein], and carbon dioxide. In Janthinobacterium sp. (strain Marseille) (Minibacterium massiliensis), this protein is 8-amino-7-oxononanoate synthase.